Here is a 228-residue protein sequence, read N- to C-terminus: 5'-methylthioadenosine/S-adenosylhomocysteine nucleosidase (228 aa).

The Proton acceptor role is filled by glutamate 11. Residues glycine 77, isoleucine 151, and 172–173 contribute to the substrate site; that span reads ME. Residue aspartate 196 is the Proton donor of the active site.

It belongs to the PNP/UDP phosphorylase family. MtnN subfamily.

The catalysed reaction is S-adenosyl-L-homocysteine + H2O = S-(5-deoxy-D-ribos-5-yl)-L-homocysteine + adenine. It catalyses the reaction S-methyl-5'-thioadenosine + H2O = 5-(methylsulfanyl)-D-ribose + adenine. The enzyme catalyses 5'-deoxyadenosine + H2O = 5-deoxy-D-ribose + adenine. The protein operates within amino-acid biosynthesis; L-methionine biosynthesis via salvage pathway; S-methyl-5-thio-alpha-D-ribose 1-phosphate from S-methyl-5'-thioadenosine (hydrolase route): step 1/2. Catalyzes the irreversible cleavage of the glycosidic bond in both 5'-methylthioadenosine (MTA) and S-adenosylhomocysteine (SAH/AdoHcy) to adenine and the corresponding thioribose, 5'-methylthioribose and S-ribosylhomocysteine, respectively. Also cleaves 5'-deoxyadenosine, a toxic by-product of radical S-adenosylmethionine (SAM) enzymes, into 5-deoxyribose and adenine. This Staphylococcus saprophyticus subsp. saprophyticus (strain ATCC 15305 / DSM 20229 / NCIMB 8711 / NCTC 7292 / S-41) protein is 5'-methylthioadenosine/S-adenosylhomocysteine nucleosidase.